Consider the following 72-residue polypeptide: Large ribosomal subunit protein bL28 (72 aa).

The protein belongs to the bacterial ribosomal protein bL28 family.

The protein is Large ribosomal subunit protein bL28 of Chlorobaculum parvum (strain DSM 263 / NCIMB 8327) (Chlorobium vibrioforme subsp. thiosulfatophilum).